Here is a 178-residue protein sequence, read N- to C-terminus: Leukemia NUP98 fusion partner 1 (178 aa).

Disordered stretches follow at residues 28–55 (EDQRGLRERHRLQATSHRKTSLPCPLPV), 89–108 (SEDGSFKEPLESKGRSHSKI), and 147–178 (IKSRKKVEEERSSRKEEHGEAHMAPLFEKGPE). A compositionally biased stretch (basic residues) spans 34–47 (RERHRLQATSHRKT). Residues 147–167 (IKSRKKVEEERSSRKEEHGEA) are compositionally biased toward basic and acidic residues.

This Homo sapiens (Human) protein is Leukemia NUP98 fusion partner 1 (LNP1).